Here is a 3083-residue protein sequence, read N- to C-terminus: Genome polyprotein (3083 aa).

Residues 173–313 form the Peptidase S30 domain; it reads VVRSASVNNL…VFFYDDVDHY (141 aa). Residues H226, E235, and S267 each act as for P1 proteinase activity in the active site. Positions 365 to 368 match the Involved in interaction with stylet and aphid transmission motif; sequence KLSC. The Involved in virions binding and aphid transmission signature appears at 621–623; it reads PTK. The 123-residue stretch at 647–769 folds into the Peptidase C6 domain; sequence MYIAKEGYCY…QSEMKHYRVG (123 aa). Active-site for helper component proteinase activity residues include C655 and H728. The Helicase ATP-binding domain maps to 1239 to 1391; that stretch reads EIASSNEGEF…TQFAVKVKTE (153 aa). 1252-1259 contributes to the ATP binding site; sequence GAVGSGKS. The DECH box signature appears at 1341 to 1344; that stretch reads DECH. The Helicase C-terminal domain occupies 1410–1569; sequence DMIQHGNNIL…GLSVTTHGVS (160 aa). The Nuclear localization signal motif lies at 1894-1903; the sequence is KRGKVKGNNS. Y1918 bears the O-(5'-phospho-RNA)-tyrosine mark. The region spanning 2045–2263 is the Peptidase C4 domain; the sequence is SKSIYKGVRD…IAWGLLNLVD (219 aa). Active-site for nuclear inclusion protein A activity residues include H2090, D2125, and C2195. One can recognise a RdRp catalytic domain in the interval 2529 to 2653; the sequence is WLYCHADGSQ…AVKDEDSGLL (125 aa). The segment at 2805–2854 is disordered; sequence SDTQTKEADAGAAKRDKDEEKEKKKDVASSSANEKTMTATAKDKDVNAGS. Residues 2808–2831 show a composition bias toward basic and acidic residues; it reads QTKEADAGAAKRDKDEEKEKKKDV. The segment covering 2832-2843 has biased composition (polar residues); it reads ASSSANEKTMTA.

The protein belongs to the potyviridae genome polyprotein family. As to quaternary structure, interacts with host eIF4E protein (via cap-binding region); this interaction mediates the translation of the VPg-viral RNA conjugates. Part of a complex that comprises VPg, RNA, host EIF4E and EIF4G; this interaction mediates the translation of the VPg-viral RNA conjugates. In terms of processing, VPg is uridylylated by the polymerase and is covalently attached to the 5'-end of the genomic RNA. This uridylylated form acts as a nucleotide-peptide primer for the polymerase. Potyviral RNA is expressed as two polyproteins which undergo post-translational proteolytic processing. Genome polyprotein is processed by NIa-pro, P1 and HC-pro proteinases resulting in the production of at least ten individual proteins. P3N-PIPO polyprotein is cleaved by P1 and HC-pro proteinases resulting in the production of three individual proteins. The P1 proteinase and the HC-pro cleave only their respective C-termini autocatalytically. 6K1 is essential for proper proteolytic separation of P3 from CI.

The protein resides in the host cytoplasmic vesicle. It localises to the host nucleus. Its subcellular location is the virion. It catalyses the reaction RNA(n) + a ribonucleoside 5'-triphosphate = RNA(n+1) + diphosphate. It carries out the reaction Hydrolyzes glutaminyl bonds, and activity is further restricted by preferences for the amino acids in P6 - P1' that vary with the species of potyvirus, e.g. Glu-Xaa-Xaa-Tyr-Xaa-Gln-|-(Ser or Gly) for the enzyme from tobacco etch virus. The natural substrate is the viral polyprotein, but other proteins and oligopeptides containing the appropriate consensus sequence are also cleaved.. The catalysed reaction is Hydrolyzes a Gly-|-Gly bond at its own C-terminus, commonly in the sequence -Tyr-Xaa-Val-Gly-|-Gly, in the processing of the potyviral polyprotein.. Required for aphid transmission and also has proteolytic activity. Only cleaves a Gly-Gly dipeptide at its own C-terminus. Interacts with virions and aphid stylets. Acts as a suppressor of RNA-mediated gene silencing, also known as post-transcriptional gene silencing (PTGS), a mechanism of plant viral defense that limits the accumulation of viral RNAs. May have RNA-binding activity. Its function is as follows. Has helicase activity. It may be involved in replication. In terms of biological role, indispensable for virus replication. Functionally, mediates the cap-independent, EIF4E-dependent translation of viral genomic RNAs. Binds to the cap-binding site of host EIF4E and thus interferes with the host EIF4E-dependent mRNA export and translation. VPg-RNA directly binds EIF4E and is a template for transcription. Also forms trimeric complexes with EIF4E-EIF4G, which are templates for translation. Has RNA-binding and proteolytic activities. Its function is as follows. An RNA-dependent RNA polymerase that plays an essential role in the virus replication. In terms of biological role, involved in aphid transmission, cell-to-cell and systemis movement, encapsidation of the viral RNA and in the regulation of viral RNA amplification. The protein is Genome polyprotein of Zucchini yellow mosaic virus (strain Reunion Island) (ZYMV).